The following is a 111-amino-acid chain: Ig kappa chain V-III region PC 6684 (111 aa).

The framework-1 stretch occupies residues 1–23; sequence DIVLTQSPASLAVSLGQRATISC. C23 and C92 form a disulfide bridge. The interval 24-38 is complementarity-determining-1; it reads RASKSVSTSGYSYMH. A framework-2 region spans residues 39-53; that stretch reads WYQQKPGQPPKLLIY. Residues 54–60 are complementarity-determining-2; that stretch reads LASNLES. The interval 61–92 is framework-3; it reads GVPARFSGSGSGTDFTLNIHPVEEEDAATYYC. The interval 93 to 101 is complementarity-determining-3; sequence QHSRELPRT. Positions 102 to 111 are framework-4; it reads FGGGTKLEIK.

The protein is Ig kappa chain V-III region PC 6684 of Mus musculus (Mouse).